A 178-amino-acid chain; its full sequence is CASP-like protein 5B1 (178 aa).

The Cytoplasmic segment spans residues 1–37 (MDASNPIVHPIGDHHAVDLEEGPLIVTMKELPGMPGT). Residues 38–58 (IGGLALRVGQFLFAAAAIVIM) form a helical membrane-spanning segment. At 59–69 (VTGDEFTNYTA) the chain is on the extracellular side. Residue asparagine 66 is glycosylated (N-linked (GlcNAc...) asparagine). Residues 70–90 (FCYLVAAMSLQFLWSFMLAIL) traverse the membrane as a helical segment. Topologically, residues 91-104 (DTYALLIKRGLRNS) are cytoplasmic. The chain crosses the membrane as a helical span at residues 105–125 (VLLSLFVVGDWVTATLSLAAA). The Extracellular segment spans residues 126-154 (CSTAGVTVLFDNDLNYCGQMHCHRYQLSA). The helical transmembrane segment at 155–175 (AMAFLSWLLIGMSSLLTFWLW) threads the bilayer. The Cytoplasmic portion of the chain corresponds to 176 to 178 (ASE).

It belongs to the Casparian strip membrane proteins (CASP) family. Homodimer and heterodimers.

Its subcellular location is the cell membrane. This Ginkgo biloba (Ginkgo) protein is CASP-like protein 5B1.